The sequence spans 104 residues: L-rhamnose mutarotase (104 aa).

Residue Tyr18 coordinates substrate. Residue His22 is the Proton donor of the active site. Residues Tyr41 and 76 to 77 (WW) contribute to the substrate site.

Belongs to the rhamnose mutarotase family. Homodimer.

It localises to the cytoplasm. The catalysed reaction is alpha-L-rhamnose = beta-L-rhamnose. It functions in the pathway carbohydrate metabolism; L-rhamnose metabolism. Involved in the anomeric conversion of L-rhamnose. This Phocaeicola vulgatus (strain ATCC 8482 / DSM 1447 / JCM 5826 / CCUG 4940 / NBRC 14291 / NCTC 11154) (Bacteroides vulgatus) protein is L-rhamnose mutarotase.